The primary structure comprises 121 residues: UPF0295 protein BH0952 (121 aa).

2 consecutive transmembrane segments (helical) span residues 12–32 (IRTF…IGIF) and 41–61 (VLAM…YFWI).

Belongs to the UPF0295 family.

The protein localises to the cell membrane. The protein is UPF0295 protein BH0952 of Halalkalibacterium halodurans (strain ATCC BAA-125 / DSM 18197 / FERM 7344 / JCM 9153 / C-125) (Bacillus halodurans).